The following is a 262-amino-acid chain: Ribosomal RNA small subunit methyltransferase A (262 aa).

Residues Asn14, Leu16, Gly41, Glu62, Asp87, and Asn109 each contribute to the S-adenosyl-L-methionine site.

It belongs to the class I-like SAM-binding methyltransferase superfamily. rRNA adenine N(6)-methyltransferase family. RsmA subfamily.

The protein resides in the cytoplasm. It carries out the reaction adenosine(1518)/adenosine(1519) in 16S rRNA + 4 S-adenosyl-L-methionine = N(6)-dimethyladenosine(1518)/N(6)-dimethyladenosine(1519) in 16S rRNA + 4 S-adenosyl-L-homocysteine + 4 H(+). Specifically dimethylates two adjacent adenosines (A1518 and A1519) in the loop of a conserved hairpin near the 3'-end of 16S rRNA in the 30S particle. May play a critical role in biogenesis of 30S subunits. In Francisella tularensis subsp. holarctica (strain FTNF002-00 / FTA), this protein is Ribosomal RNA small subunit methyltransferase A.